Here is a 641-residue protein sequence, read N- to C-terminus: 1-deoxy-D-xylulose-5-phosphate synthase (641 aa).

Residues His-79 and 120-122 (GHS) each bind thiamine diphosphate. Asp-151 provides a ligand contact to Mg(2+). Thiamine diphosphate is bound by residues 152–153 (GS), Asn-180, Tyr-290, and Glu-372. Asn-180 contacts Mg(2+).

It belongs to the transketolase family. DXPS subfamily. As to quaternary structure, homodimer. Requires Mg(2+) as cofactor. The cofactor is thiamine diphosphate.

It carries out the reaction D-glyceraldehyde 3-phosphate + pyruvate + H(+) = 1-deoxy-D-xylulose 5-phosphate + CO2. Its pathway is metabolic intermediate biosynthesis; 1-deoxy-D-xylulose 5-phosphate biosynthesis; 1-deoxy-D-xylulose 5-phosphate from D-glyceraldehyde 3-phosphate and pyruvate: step 1/1. Its function is as follows. Catalyzes the acyloin condensation reaction between C atoms 2 and 3 of pyruvate and glyceraldehyde 3-phosphate to yield 1-deoxy-D-xylulose-5-phosphate (DXP). In Rhodopseudomonas palustris (strain TIE-1), this protein is 1-deoxy-D-xylulose-5-phosphate synthase.